Reading from the N-terminus, the 292-residue chain is Formamidopyrimidine-DNA glycosylase (292 aa).

The active-site Schiff-base intermediate with DNA is the P2. Residue E3 is the Proton donor of the active site. K60 serves as the catalytic Proton donor; for beta-elimination activity. H109, R128, and R173 together coordinate DNA. The FPG-type zinc-finger motif lies at 258 to 292 (NVYRRTGRECRKCGNLIERQKITGRSTHWCPNCQK). The active-site Proton donor; for delta-elimination activity is R282.

The protein belongs to the FPG family. Monomer. Zn(2+) is required as a cofactor.

It carries out the reaction Hydrolysis of DNA containing ring-opened 7-methylguanine residues, releasing 2,6-diamino-4-hydroxy-5-(N-methyl)formamidopyrimidine.. It catalyses the reaction 2'-deoxyribonucleotide-(2'-deoxyribose 5'-phosphate)-2'-deoxyribonucleotide-DNA = a 3'-end 2'-deoxyribonucleotide-(2,3-dehydro-2,3-deoxyribose 5'-phosphate)-DNA + a 5'-end 5'-phospho-2'-deoxyribonucleoside-DNA + H(+). Functionally, involved in base excision repair of DNA damaged by oxidation or by mutagenic agents. Acts as a DNA glycosylase that recognizes and removes damaged bases. Has a preference for oxidized purines, such as 7,8-dihydro-8-oxoguanine (8-oxoG). Has AP (apurinic/apyrimidinic) lyase activity and introduces nicks in the DNA strand. Cleaves the DNA backbone by beta-delta elimination to generate a single-strand break at the site of the removed base with both 3'- and 5'-phosphates. In Prochlorococcus marinus (strain MIT 9301), this protein is Formamidopyrimidine-DNA glycosylase.